Here is a 257-residue protein sequence, read N- to C-terminus: Auxin-responsive protein IAA17 (257 aa).

Disordered stretches follow at residues 1 to 51 (MSPP…PAAT) and 85 to 119 (GKKA…QVVG). The EAR-like (transcriptional repression) signature appears at 33–37 (LRLGL). Low complexity predominate over residues 105 to 118 (AAAPQAPAAKAQVV). The 89-residue stretch at 151-239 (FLYVKVSMDG…SCRRLRIMKG (89 aa)) folds into the PB1 domain.

This sequence belongs to the Aux/IAA family. As to quaternary structure, homodimers and heterodimers. As to expression, highly expressed in etiolated seedlings and flowers. Expressed in roots and green seedlings.

The protein resides in the nucleus. Its function is as follows. Aux/IAA proteins are short-lived transcriptional factors that function as repressors of early auxin response genes at low auxin concentrations. In Oryza sativa subsp. japonica (Rice), this protein is Auxin-responsive protein IAA17 (IAA17).